Reading from the N-terminus, the 321-residue chain is Lipoyl synthase (321 aa).

7 residues coordinate [4Fe-4S] cluster: Cys68, Cys73, Cys79, Cys94, Cys98, Cys101, and Ser308. The 218-residue stretch at 80 to 297 (FNHGTATFMI…KAEALAMGFT (218 aa)) folds into the Radical SAM core domain.

It belongs to the radical SAM superfamily. Lipoyl synthase family. The cofactor is [4Fe-4S] cluster.

The protein localises to the cytoplasm. It carries out the reaction [[Fe-S] cluster scaffold protein carrying a second [4Fe-4S](2+) cluster] + N(6)-octanoyl-L-lysyl-[protein] + 2 oxidized [2Fe-2S]-[ferredoxin] + 2 S-adenosyl-L-methionine + 4 H(+) = [[Fe-S] cluster scaffold protein] + N(6)-[(R)-dihydrolipoyl]-L-lysyl-[protein] + 4 Fe(3+) + 2 hydrogen sulfide + 2 5'-deoxyadenosine + 2 L-methionine + 2 reduced [2Fe-2S]-[ferredoxin]. Its pathway is protein modification; protein lipoylation via endogenous pathway; protein N(6)-(lipoyl)lysine from octanoyl-[acyl-carrier-protein]: step 2/2. Its function is as follows. Catalyzes the radical-mediated insertion of two sulfur atoms into the C-6 and C-8 positions of the octanoyl moiety bound to the lipoyl domains of lipoate-dependent enzymes, thereby converting the octanoylated domains into lipoylated derivatives. In Edwardsiella ictaluri (strain 93-146), this protein is Lipoyl synthase.